A 396-amino-acid chain; its full sequence is Inositol polyphosphate multikinase (396 aa).

Residues 1–13 are compositionally biased toward low complexity; sequence MAAEPPALRLRPP. The interval 1–22 is disordered; sequence MAAEPPALRLRPPGSTGDSPPV. Position 2 is an N-acetylalanine (alanine 2). Serine 19 carries the post-translational modification Phosphoserine. Position 58 (lysine 58) interacts with ATP. Arginine 65 contributes to the substrate binding site. ATP is bound by residues 114 to 116 and aspartate 127; that span reads EDV. Substrate-binding positions include lysine 129, 143 to 150, and glutamine 179; that span reads KIQQQVSK. Residues 300–310 carry the Nuclear localization signal motif; the sequence is RHRKLYAKKHQ. ATP is bound at residue aspartate 365.

It belongs to the inositol phosphokinase (IPK) family. It depends on Mg(2+) as a cofactor. Highly expressed in kidney, and at lower levels in hippocampus, brain cortex, cerebellum, heart and lung.

The protein localises to the nucleus. The catalysed reaction is 1D-myo-inositol 1,4,5-trisphosphate + 2 ATP = 1D-myo-inositol 1,3,4,5,6-pentakisphosphate + 2 ADP + 2 H(+). It carries out the reaction 1D-myo-inositol 1,3,4,6-tetrakisphosphate + ATP = 1D-myo-inositol 1,3,4,5,6-pentakisphosphate + ADP + H(+). The enzyme catalyses 1-octadecanoyl-2-(5Z,8Z,11Z,14Z)-eicosatetraenoyl-sn-glycero-3-phospho-1D-myo-inositol 4,5-bisphosphate + ATP = 1-octadecanoyl-2-(5Z,8Z,11Z,14Z-eicosatetraenoyl)-sn-glycero-3-phospho-(1D-myo-inositol 3,4,5-triphosphate) + ADP + H(+). It catalyses the reaction a 1,2-diacyl-sn-glycero-3-phospho-(1D-myo-inositol-4,5-bisphosphate) + ATP = a 1,2-diacyl-sn-glycero-3-phospho-(1D-myo-inositol-3,4,5-trisphosphate) + ADP + H(+). The catalysed reaction is 1D-myo-inositol 1,4,5,6-tetrakisphosphate + ATP = 1D-myo-inositol 1,3,4,5,6-pentakisphosphate + ADP + H(+). It participates in phospholipid metabolism; phosphatidylinositol metabolism. Its function is as follows. Inositol phosphate kinase with a broad substrate specificity. Phosphorylates inositol 1,4,5-trisphosphate (Ins(1,4,5)P3) first to inositol 1,3,4,5-tetrakisphosphate and then to inositol 1,3,4,5,6-pentakisphosphate (Ins(1,3,4,5,6)P5). Phosphorylates inositol 1,3,4,6-tetrakisphosphate (Ins(1,3,4,6)P4). Phosphorylates inositol 1,4,5,6-tetrakisphosphate (Ins(1,4,5,6)P4). Phosphorylates glycero-3-phospho-1D-myo-inositol 4,5-bisphosphate to glycero-3-phospho-1D-myo-inositol 3,4,5-trisphosphate. Plays an important role in MLKL-mediated necroptosis via its role in the biosynthesis of inositol pentakisphosphate (InsP5) and inositol hexakisphosphate (InsP6). Binding of these highly phosphorylated inositol phosphates to MLKL mediates the release of an N-terminal auto-inhibitory region, leading to activation of the kinase. Essential for activated phospho-MLKL to oligomerize and localize to the cell membrane during necroptosis. Required for normal embryonic development, probably via its role in the biosynthesis of inositol 1,3,4,5,6-pentakisphosphate (Ins(1,3,4,5,6)P5) and inositol hexakisphosphate (InsP6). The polypeptide is Inositol polyphosphate multikinase (Ipmk) (Rattus norvegicus (Rat)).